Here is an 88-residue protein sequence, read N- to C-terminus: Small ribosomal subunit protein bS18 (88 aa).

Residues 1–11 show a composition bias toward low complexity; that stretch reads MTTANTTAKDN. Residues 1–21 are disordered; that stretch reads MTTANTTAKDNAATKKRGRKA.

Belongs to the bacterial ribosomal protein bS18 family. As to quaternary structure, part of the 30S ribosomal subunit. Forms a tight heterodimer with protein bS6.

Binds as a heterodimer with protein bS6 to the central domain of the 16S rRNA, where it helps stabilize the platform of the 30S subunit. The sequence is that of Small ribosomal subunit protein bS18 from Thermoanaerobacter pseudethanolicus (strain ATCC 33223 / 39E) (Clostridium thermohydrosulfuricum).